Here is a 74-residue protein sequence, read N- to C-terminus: Psi-conotoxin PrIIIE (74 aa).

A signal peptide spans Met1–Ala19. A propeptide spanning residues Leu20–Arg50 is cleaved from the precursor. Intrachain disulfides connect Cys54–Cys66, Cys55–Cys71, and Cys61–Cys72. Cysteine amide is present on Cys72.

The protein belongs to the conotoxin M superfamily. As to expression, expressed by the venom duct.

It localises to the secreted. In terms of biological role, psi-conotoxins act on postsynaptic membranes, and act as non-competitive antagonist of nicotinic acetylcholine receptors (nAChR). Reversibly inhibits both adult- and fetal-types nAChR. The inhibition potency against the adult- (alpha-1/beta-1/epsilon/delta) is higher than against the fetal-type (alpha-1/beta-1/gamma/delta). Induces flaccid paralysis in goldfish, but does not induce any remarkable behavior in mice and does not block action potential in directly stimulated frog muscle preparations. This Conus parius (Cone snail) protein is Psi-conotoxin PrIIIE.